The sequence spans 142 residues: MEIVINNVKNFSKWTLHNFTEKLRVFELRDKSDAELLKLLDDLKQELATFRVSKVTATGTSKLSKITLVRKAVAKVLTVYNQRKKEEARKKYKKLSKTPLNLRPKLTRAKRKGLTTKQLTMKTIKERKRAENLPKRKYALLA.

It belongs to the universal ribosomal protein uL29 family.

The protein is Large ribosomal subunit protein uL29 (RPL35) of Theileria annulata.